The chain runs to 232 residues: Large ribosomal subunit protein uL1 (232 aa).

It belongs to the universal ribosomal protein uL1 family. In terms of assembly, part of the 50S ribosomal subunit.

Functionally, binds directly to 23S rRNA. The L1 stalk is quite mobile in the ribosome, and is involved in E site tRNA release. In terms of biological role, protein L1 is also a translational repressor protein, it controls the translation of the L11 operon by binding to its mRNA. The sequence is that of Large ribosomal subunit protein uL1 from Xylella fastidiosa (strain M23).